The chain runs to 64 residues: Large ribosomal subunit protein uL29 (64 aa).

It belongs to the universal ribosomal protein uL29 family.

The sequence is that of Large ribosomal subunit protein uL29 from Ralstonia pickettii (strain 12J).